Reading from the N-terminus, the 158-residue chain is Large ribosomal subunit protein mL50 (158 aa).

Belongs to the mitochondrion-specific ribosomal protein mL50 family. In terms of assembly, component of the mitochondrial ribosome large subunit (39S) which comprises a 16S rRNA and about 50 distinct proteins.

The protein localises to the mitochondrion. This is Large ribosomal subunit protein mL50 (MRPL50) from Pongo abelii (Sumatran orangutan).